The following is an 82-amino-acid chain: Sec-independent protein translocase protein TatA (82 aa).

Residues 1-21 (MGSFSIWHWLIVLLIVVMVFG) traverse the membrane as a helical segment. The interval 46–82 (GASTDDSATTSAPAGQVTNNSTAADKTTIDVEAKHKS) is disordered. The segment covering 49–70 (TDDSATTSAPAGQVTNNSTAAD) has biased composition (polar residues). Residues 72–82 (TTIDVEAKHKS) are compositionally biased toward basic and acidic residues.

The protein belongs to the TatA/E family. As to quaternary structure, the Tat system comprises two distinct complexes: a TatABC complex, containing multiple copies of TatA, TatB and TatC subunits, and a separate TatA complex, containing only TatA subunits. Substrates initially bind to the TatABC complex, which probably triggers association of the separate TatA complex to form the active translocon.

It is found in the cell inner membrane. Part of the twin-arginine translocation (Tat) system that transports large folded proteins containing a characteristic twin-arginine motif in their signal peptide across membranes. TatA could form the protein-conducting channel of the Tat system. In Acidovorax sp. (strain JS42), this protein is Sec-independent protein translocase protein TatA.